Consider the following 401-residue polypeptide: Ninja-family protein MODD (401 aa).

2 disordered regions span residues K95 to R135 and T215 to P238. The span at R105–S130 shows a compositional bias: low complexity. Over residues N217–H226 the composition is skewed to polar residues.

Belongs to the Ninja family. Interacts with BZIP46, TPR3 and PUB70.

Its subcellular location is the nucleus. In terms of biological role, acts as a negative regulator of abscisic acid (ABA) signaling and drought tolerance. Mediates deactivation and degradation of BZIP46, a positive regulator of ABA signaling and drought stress tolerance. Represses BZIP46 activity via interaction with the TPR3-HDAC1 corepressor complex and down-regulation of the histone acetylation level at BZIP46 target genes. Promotes BZIP46 degradation via interaction with the U-box type ubiquitin E3 ligase PUB70. This chain is Ninja-family protein MODD, found in Oryza sativa subsp. japonica (Rice).